A 249-amino-acid chain; its full sequence is Vitamin B12 import ATP-binding protein BtuD (249 aa).

Residues M5–N233 enclose the ABC transporter domain. ATP is bound at residue G33 to S40.

Belongs to the ABC transporter superfamily. Vitamin B12 importer (TC 3.A.1.13.1) family. The complex is composed of two ATP-binding proteins (BtuD), two transmembrane proteins (BtuC) and a solute-binding protein (BtuF).

Its subcellular location is the cell inner membrane. The enzyme catalyses an R-cob(III)alamin(out) + ATP + H2O = an R-cob(III)alamin(in) + ADP + phosphate + H(+). Its function is as follows. Part of the ABC transporter complex BtuCDF involved in vitamin B12 import. Responsible for energy coupling to the transport system. The polypeptide is Vitamin B12 import ATP-binding protein BtuD (Citrobacter koseri (strain ATCC BAA-895 / CDC 4225-83 / SGSC4696)).